The following is a 417-amino-acid chain: Histidine--tRNA ligase (417 aa).

Belongs to the class-II aminoacyl-tRNA synthetase family. In terms of assembly, homodimer.

The protein resides in the cytoplasm. The catalysed reaction is tRNA(His) + L-histidine + ATP = L-histidyl-tRNA(His) + AMP + diphosphate + H(+). The sequence is that of Histidine--tRNA ligase from Nitratidesulfovibrio vulgaris (strain DP4) (Desulfovibrio vulgaris).